Reading from the N-terminus, the 378-residue chain is Tetraacyldisaccharide 4'-kinase (378 aa).

Position 63 to 70 (63 to 70) interacts with ATP; it reads AVGGAGKT.

The protein belongs to the LpxK family.

The catalysed reaction is a lipid A disaccharide + ATP = a lipid IVA + ADP + H(+). Its pathway is glycolipid biosynthesis; lipid IV(A) biosynthesis; lipid IV(A) from (3R)-3-hydroxytetradecanoyl-[acyl-carrier-protein] and UDP-N-acetyl-alpha-D-glucosamine: step 6/6. Functionally, transfers the gamma-phosphate of ATP to the 4'-position of a tetraacyldisaccharide 1-phosphate intermediate (termed DS-1-P) to form tetraacyldisaccharide 1,4'-bis-phosphate (lipid IVA). The chain is Tetraacyldisaccharide 4'-kinase from Anaeromyxobacter dehalogenans (strain 2CP-C).